Here is a 520-residue protein sequence, read N- to C-terminus: Ribonuclease Y (520 aa).

At 1–3 (MTP) the chain is on the extracellular side. Residues 4–24 (IMMVLISILLILLGLVVGYFV) traverse the membrane as a helical segment. Topologically, residues 25–520 (RKTIAEAKIA…RETRAVEYAK (496 aa)) are cytoplasmic. A coiled-coil region spans residues 29–141 (AEAKIAGARG…KVDEMIRMQQ (113 aa)). Residues 210–273 (TVSVVNLPND…ETARIALDKL (64 aa)) form the KH domain. Positions 336–429 (VLKHSMEVAF…VAAADALSAA (94 aa)) constitute an HD domain.

This sequence belongs to the RNase Y family. Homodimer. Component of a possible RNA degradosome complex composed of rny, rnjA, rnjB, pnp, pfkA and eno (although rnjA and rnjB's presence is unclear). Interacts with RNA helicase CshA which may also be a member of the RNA degradosome complex. Interacts with full-length dynamin-like protein DynA. The cofactor is Mg(2+). Requires Mn(2+) as cofactor. It depends on Zn(2+) as a cofactor.

Its subcellular location is the cell membrane. Shows preference for transcripts carrying a monophosphate group at the 5' end. Functionally, endoribonuclease that initiates mRNA decay. Initiates the decay of all SAM-dependent riboswitches, such as yitJ riboswitch. Involved in processing of the gapA operon mRNA, it cleaves between cggR and gapA. Is also the decay-initiating endonuclease for rpsO mRNA. Involved in degradation of type I toxin-antitoxin system bsrG/SR4 RNAs and a minor role in degradation of type I toxin-antitoxin system bsrE/SR5 degradation. The protein is Ribonuclease Y (rny) of Bacillus subtilis (strain 168).